A 1085-amino-acid chain; its full sequence is MPKRTDISNILLIGSGPIVIGQACEFDYSGTQSCKTLKSLGYRVILINSNPATVMTDPEFSHQTYIQPITPENIAAIIKKEKIDAILPTMGGQTALNAVMQMHQRGMLEGVELLGAKIEAIKKGEDRQAFKEAMLKIGMDLPKGRYAYSELEALEAISEIGFPAIIRASFTLAGGGSGVAYNIEEFQELAKNALDASPINEILIEESLLGWKEYEMEVIRDGKDNCIIVCCIENIDPMGVHTGDSITIAPSLTLTDKEYQRMRDASFAILREIGVDTGGSNVQFAIHPETLRMVVIEMNPRVSRSSALASKATGFPIAKVATMLAVGFSLDEIKNDITNTPASFEPSLDYIVVKIPRFAFEKFAGVSSTLGTSMKSIGEVMAIGGNFLEALQKALCSLENNWLGFESLSKDLEAIKKEIRRPNPKRLLYIADAFRLGVSVDEVFELCQIDRWFLSQIQKLVKAEEGINSSVLTDAKKLRGLKNLGFSDARIATKIKENENLEVSPFEVELARSNLQIAPHFEEVDTCAAEFLSLTPYLYSTYAPNPLPPIGNKQEKQEKKILIIGSGPNRIGQGIEFDYCCVHASFALKDLNIKSVMLNCNPETVSTDYDTSDTLYFEPIHFECVKSIIQRERVDGIIVHFGGQTPLKLAKDLAKMQAPIIGTPFKVIDIAEDREKFSLFLKELDIKQPENGMAKSVDEAYSIANAIGFPIIVRPSYVLGGQHMQILENIEELRHYLESVTHSLEISPKNPLLIDKFLEKAVELDVDAICDKKEVYIAGILQHIEEAGIHSGDSACFIPSTLSPEILDEIERVSAKIALHLGVVGLLNIQFAVYQNSLYLIEVNPRASRTVPFLSKALGVPLAKVATRVMVLEDLKEALKFYDKKNIVEYSKGVYKPKMPHFVALKEAVFPFNKLYGSDLILGPEMKSTGEVMGIARSLGLAFFKAQTACFNPIKNKGLIFVSIKDKDKEEACVLMKRLVELGFELCTTEGTHKALEKAGVKSLKVLKISEGRPNIMDLMMNGEISMAINTSDHKSQDDAKLIRASVLKNHVSYFTTLSAIEVLLLALEESSQEDELLALQDYLK.

Residues 1–399 are carboxyphosphate synthetic domain; the sequence is MPKRTDISNI…ALQKALCSLE (399 aa). Positions 127, 167, 174, 206, 208, 213, 239, 240, 241, 283, and 297 each coordinate ATP. Residues 131 to 326 enclose the ATP-grasp 1 domain; that stretch reads KEAMLKIGMD…IAKVATMLAV (196 aa). Gln283, Glu297, and Asn299 together coordinate Mg(2+). Mn(2+)-binding residues include Gln283, Glu297, and Asn299. The oligomerization domain stretch occupies residues 400-551; it reads NNWLGFESLS…YAPNPLPPIG (152 aa). The carbamoyl phosphate synthetic domain stretch occupies residues 552–951; sequence NKQEKQEKKI…AFFKAQTACF (400 aa). The region spanning 678 to 871 is the ATP-grasp 2 domain; that stretch reads SLFLKELDIK…LAKVATRVMV (194 aa). Positions 714, 756, 758, 763, 788, 789, 790, 791, 830, and 842 each coordinate ATP. 3 residues coordinate Mg(2+): Gln830, Glu842, and Asn844. Gln830, Glu842, and Asn844 together coordinate Mn(2+). Residues 952–1085 enclose the MGS-like domain; it reads NPIKNKGLIF…ELLALQDYLK (134 aa). The allosteric domain stretch occupies residues 952 to 1085; sequence NPIKNKGLIF…ELLALQDYLK (134 aa).

Belongs to the CarB family. In terms of assembly, composed of two chains; the small (or glutamine) chain promotes the hydrolysis of glutamine to ammonia, which is used by the large (or ammonia) chain to synthesize carbamoyl phosphate. Tetramer of heterodimers (alpha,beta)4. The cofactor is Mg(2+). It depends on Mn(2+) as a cofactor.

It catalyses the reaction hydrogencarbonate + L-glutamine + 2 ATP + H2O = carbamoyl phosphate + L-glutamate + 2 ADP + phosphate + 2 H(+). The enzyme catalyses hydrogencarbonate + NH4(+) + 2 ATP = carbamoyl phosphate + 2 ADP + phosphate + 2 H(+). Its pathway is amino-acid biosynthesis; L-arginine biosynthesis; carbamoyl phosphate from bicarbonate: step 1/1. It functions in the pathway pyrimidine metabolism; UMP biosynthesis via de novo pathway; (S)-dihydroorotate from bicarbonate: step 1/3. Functionally, large subunit of the glutamine-dependent carbamoyl phosphate synthetase (CPSase). CPSase catalyzes the formation of carbamoyl phosphate from the ammonia moiety of glutamine, carbonate, and phosphate donated by ATP, constituting the first step of 2 biosynthetic pathways, one leading to arginine and/or urea and the other to pyrimidine nucleotides. The large subunit (synthetase) binds the substrates ammonia (free or transferred from glutamine from the small subunit), hydrogencarbonate and ATP and carries out an ATP-coupled ligase reaction, activating hydrogencarbonate by forming carboxy phosphate which reacts with ammonia to form carbamoyl phosphate. In Helicobacter pylori (strain J99 / ATCC 700824) (Campylobacter pylori J99), this protein is Carbamoyl phosphate synthase large chain.